We begin with the raw amino-acid sequence, 265 residues long: U6 snRNA phosphodiesterase 1 (265 aa).

A disordered region spans residues 1 to 72 (MSAAPLVGYS…DSTKHGGRVR (72 aa)). Over residues 20–31 (DGMRTRPGDGSH) the composition is skewed to basic and acidic residues. Histidine 120 (proton acceptor) is an active-site residue. AMP is bound at residue 120-122 (HLS). Residues glutamine 164, tyrosine 202, and 206 to 210 (SFHLS) each bind UMP. AMP-binding positions include tyrosine 202 and 204–210 (DPSFHLS). The Proton donor role is filled by histidine 208.

The protein belongs to the 2H phosphoesterase superfamily. USB1 family. Interacts with PLRG1, CDC5L and PRPF19.

It is found in the nucleus. It carries out the reaction a 3'-end uridylyl-uridine-RNA = a 3'-end 2',3'-cyclophospho-uridine-RNA + uridine. It catalyses the reaction a 3'-end uridylyl-adenosine-RNA = a 3'-end 2',3'-cyclophospho-uridine-RNA + adenosine. 3'-5' RNA exonuclease activity is inhibited by a 3' phosphate terminated RNA. Functionally, 3'-5' RNA exonuclease that trims the 3' end of oligo(U) and oligo(A) tracts of the pre-U6 small nuclear RNA (snRNA) molecule, leading to the formation of a mature U6 snRNA 3' end-terminated with a 2',3'-cyclic phosphate. Participates in the U6 snRNA 3' end processing that prevents U6 snRNA degradation. In addition also removes uridines from the 3' end of U6atac snRNA and possibly the vault RNA VTRNA1-1. The polypeptide is U6 snRNA phosphodiesterase 1 (Homo sapiens (Human)).